The following is a 61-amino-acid chain: Small ribosomal subunit protein uS14 (61 aa).

Residues cysteine 24, cysteine 27, cysteine 40, and cysteine 43 each coordinate Zn(2+).

Belongs to the universal ribosomal protein uS14 family. Zinc-binding uS14 subfamily. As to quaternary structure, part of the 30S ribosomal subunit. Contacts proteins S3 and S10. The cofactor is Zn(2+).

In terms of biological role, binds 16S rRNA, required for the assembly of 30S particles and may also be responsible for determining the conformation of the 16S rRNA at the A site. The sequence is that of Small ribosomal subunit protein uS14 from Clostridium botulinum (strain 657 / Type Ba4).